Reading from the N-terminus, the 62-residue chain is Sperm protamine P1 (62 aa).

The segment at 1–62 is disordered; sequence MARYRHSRSR…RYSRRRRRRY (62 aa).

It belongs to the protamine P1 family. As to expression, testis.

The protein resides in the nucleus. It localises to the chromosome. Its function is as follows. Protamines substitute for histones in the chromatin of sperm during the haploid phase of spermatogenesis. They compact sperm DNA into a highly condensed, stable and inactive complex. The protein is Sperm protamine P1 (PRM1) of Bettongia penicillata (Brush-tailed bettong).